The sequence spans 239 residues: Putative CRISPR-associated endoribonuclease-like protein Cas6nc (239 aa).

It belongs to the CRISPR-associated protein Cas6/Cse3/CasE family. As to quaternary structure, monomer; homodimer when crystallized in the presence of crRNA. Varying the crRNA sequence varies degree of oligomerization and structure.

In terms of biological role, CRISPR (clustered regularly interspaced short palindromic repeat), is an adaptive immune system that provides protection against mobile genetic elements (viruses, transposable elements and conjugative plasmids). CRISPR clusters contain sequences complementary to antecedent mobile elements and target invading nucleic acids. CRISPR clusters are transcribed and processed into CRISPR RNA (crRNA), also called psiRNA (prokaryotic silencing) in this organism (Potential). The chain is Putative CRISPR-associated endoribonuclease-like protein Cas6nc (cas6nc) from Pyrococcus horikoshii (strain ATCC 700860 / DSM 12428 / JCM 9974 / NBRC 100139 / OT-3).